The following is a 910-amino-acid chain: Adhesion G-protein coupled receptor F1 (910 aa).

Residues 1–19 form the signal peptide; it reads MKVGVLWLISFFTFTDGHG. Residues 20 to 583 lie on the Extracellular side of the membrane; it reads GFLGKNDGIK…SPFVPSTIFP (564 aa). N139, N168, N205, N282, N310, N317, N329, N354, N368, N389, N410, N423, N437, N455, N512, N528, and N553 each carry an N-linked (GlcNAc...) asparagine glycan. An SEA domain is found at 148 to 256; that stretch reads ERTKIWGTFK…GSFRVFGKAQ (109 aa). Intrachain disulfides connect C257/C287 and C275/C299. In terms of domain architecture, GAIN-B spans 437–579; sequence NKSQLKRGYS…SILMSPFVPS (143 aa). 2 cysteine pairs are disulfide-bonded: C534-C561 and C549-C563. The tract at residues 534–579 is GPS; the sequence is CVFWDFSHLQWNDAGCHLVNETQDIVTCQCTHLTSFSILMSPFVPS. Residues 568–576 are stachel; it reads SFSILMSPF. The helical transmembrane segment at 584 to 609 threads the bilayer; sequence VVKWITYVGLGISIGSLILCLIIEAL. Residues 610–621 lie on the Cytoplasmic side of the membrane; sequence FWKQIKKSQTSH. The chain crosses the membrane as a helical span at residues 622–646; it reads TRRICMVNIALSLLIADVWFIVGAT. At 647 to 658 the chain is on the extracellular side; it reads VDTTVNPSGVCT. C657 and C733 are disulfide-bonded. A helical membrane pass occupies residues 659 to 684; the sequence is AAVFFTHFFYLSLFFWMLMLGILLAY. At 685 to 696 the chain is on the cytoplasmic side; it reads RIILVFHHMAQH. The chain crosses the membrane as a helical span at residues 697 to 719; the sequence is LMMAVGFCLGYGCPLIISVITIA. Over 720–742 the chain is Extracellular; the sequence is VTQPSNTYKRKDVCWLNWSNGSK. N-linked (GlcNAc...) asparagine glycosylation is found at N736 and N739. A helical transmembrane segment spans residues 743–767; it reads PLLAFVVPALAIVAVNFVVVLLVLT. Residues 768–784 lie on the Cytoplasmic side of the membrane; that stretch reads KLWRPTVGERLSRDDKA. The helical transmembrane segment at 785-813 threads the bilayer; the sequence is TIIRVGKSLLILTPLLGLTWGFGIGTIVD. At 814-816 the chain is on the extracellular side; the sequence is SQN. Residues 817-842 traverse the membrane as a helical segment; it reads LAWHVIFALLNAFQGFFILCFGILLD. Residues 843 to 910 are Cytoplasmic-facing; that stretch reads SKLRQLLFNK…IMLTQFVSNE (68 aa).

This sequence belongs to the G-protein coupled receptor 2 family. Adhesion G-protein coupled receptor (ADGR) subfamily. In terms of assembly, heterodimer of 2 chains generated by proteolytic processing; the large extracellular N-terminal fragment and the membrane-bound C-terminal fragment predominantly remain associated and non-covalently linked. Autoproteolytically processed at the GPS region of the GAIN-B domain; this cleavage modulates receptor activity. Post-translationally, glycosylated. Glycosylation at Asn-389 is required for secretion or folding. In terms of tissue distribution, mainly expressed in the kidney. Up-regulated in lung adenocarcinomas and prostate cancers.

The protein resides in the cell membrane. Its subcellular location is the secreted. Its activity is regulated as follows. Forms a heterodimer of 2 chains generated by proteolytic processing that remain associated through non-covalent interactions mediated by the GAIN-B domain. In the inactivated receptor, the Stachel sequence (also named stalk) is embedded in the GAIN-B domain, where it adopts a beta-strand conformation. On activation, the Stachel moves into the 7 transmembrane region and adopts a twisted hook-shaped configuration that forms contacts within the receptor, leading to coupling of a G-alpha protein, which activates signaling. The cleaved GAIN-B and N-terminal domains can then dissociate from the rest of the receptor. Its function is as follows. Adhesion G-protein coupled receptor (aGPCR) for N-docosahexaenoylethanolamine (synaptamide), an omega-3 fatty acid lipid highly enriched in the brain. Ligand binding causes a conformation change that triggers signaling via guanine nucleotide-binding proteins (G proteins) and modulates the activity of downstream effectors, such as adenylate cyclase. ADGRF1 is coupled to G(s) G proteins and mediates activation of adenylate cyclase activity. Also able to couple to G(q), G(i) and G(12)/G(13) G proteins; additional evidence is however required to confirm this result in vivo. Involved in the development of neurons and cognitive function. In liver, involved in fat accumulation. The polypeptide is Adhesion G-protein coupled receptor F1 (Homo sapiens (Human)).